Reading from the N-terminus, the 335-residue chain is Beta-ketoacyl-[acyl-carrier-protein] synthase III (335 aa).

Active-site residues include Cys119 and His261. Residues 262–266 (QANQR) are ACP-binding. Asn291 is an active-site residue.

Belongs to the thiolase-like superfamily. FabH family. Homodimer.

Its subcellular location is the cytoplasm. It carries out the reaction malonyl-[ACP] + acetyl-CoA + H(+) = 3-oxobutanoyl-[ACP] + CO2 + CoA. It participates in lipid metabolism; fatty acid biosynthesis. Catalyzes the condensation reaction of fatty acid synthesis by the addition to an acyl acceptor of two carbons from malonyl-ACP. Catalyzes the first condensation reaction which initiates fatty acid synthesis and may therefore play a role in governing the total rate of fatty acid production. Possesses both acetoacetyl-ACP synthase and acetyl transacylase activities. Its substrate specificity determines the biosynthesis of branched-chain and/or straight-chain of fatty acids. In Prochlorococcus marinus (strain MIT 9215), this protein is Beta-ketoacyl-[acyl-carrier-protein] synthase III.